A 222-amino-acid chain; its full sequence is Eukaryotic translation initiation factor 4E-1 (222 aa).

Residues 1 to 22 (MVDEVEKPASLEESKTNTREVE) show a composition bias toward basic and acidic residues. The disordered stretch occupies residues 1–37 (MVDEVEKPASLEESKTNTREVEEGAEEVIESDDTMSS). Over residues 23-33 (EGAEEVIESDD) the composition is skewed to acidic residues. EIF4G-binding regions lie at residues 47–50 (HPLE) and 57–93 (FDNP…NNIH). MRNA-binding positions include 65–70 (KQAAWG), lysine 97, and 115–116 (WE). Cysteine 120 and cysteine 158 are disulfide-bonded. The interval 141–150 (YTLLAMIGEQ) is EIF4G-binding. MRNA-binding positions include 165–170 (RVRQEK) and 210–214 (KKLDR).

The protein belongs to the eukaryotic initiation factor 4E family. As to quaternary structure, EIF4F is a multi-subunit complex, the composition of which varies with external and internal environmental conditions. It is composed of at least EIF4A, EIF4E and EIF4G. EIF4E is also known to interact with other partners. In higher plants two isoforms of EIF4F have been identified, named isoform EIF4F and isoform EIF(iso)4F. Isoform EIF4F has subunits p220 and p26, whereas isoform EIF(iso)4F has subunits p82 and p28. In terms of processing, according to the redox status, the Cys-120-Cys-158 disulfide bridge may have a role in regulating protein function by affecting its ability to bind capped mRNA. Expressed ubiquitously in seedlings, roots, leaves, sepals, petals, anthers and dehisced pollen, with highest levels in pollen, maturing anthers and roots. Strongly expressed in susceptible plants but not in resistant ones.

Its subcellular location is the nucleus. The protein localises to the cytoplasm. Its function is as follows. Component of the protein complex eIF4F, which is involved in the recognition of the mRNA cap, ATP-dependent unwinding of 5'-terminal secondary structure and recruitment of mRNA to the ribosome. Recognizes and binds the 7-methylguanosine-containing mRNA cap during an early step in the initiation of protein synthesis and facilitates ribosome binding by inducing the unwinding of the mRNAs secondary structures. Key component of recessive resistance to potyviruses. Functionally, (Microbial infection) Susceptibility host factor required for viral infection (e.g. potato virus Y (PVY) and pepper mottle virus (PepMoV)) by recruiting viral RNAs to the host ribosomal complex via an interaction with viral genome-linked protein (VPg). This is Eukaryotic translation initiation factor 4E-1 from Nicotiana tabacum (Common tobacco).